Here is a 526-residue protein sequence, read N- to C-terminus: ATP synthase subunit alpha (526 aa).

171-178 serves as a coordination point for ATP; sequence GDRQTGKT.

It belongs to the ATPase alpha/beta chains family. F-type ATPases have 2 components, CF(1) - the catalytic core - and CF(0) - the membrane proton channel. CF(1) has five subunits: alpha(3), beta(3), gamma(1), delta(1), epsilon(1). CF(0) has four main subunits: a(1), b(1), b'(1) and c(9-12).

The protein localises to the cell inner membrane. It catalyses the reaction ATP + H2O + 4 H(+)(in) = ADP + phosphate + 5 H(+)(out). Functionally, produces ATP from ADP in the presence of a proton gradient across the membrane. The alpha chain is a regulatory subunit. The sequence is that of ATP synthase subunit alpha from Chlorobium phaeobacteroides (strain DSM 266 / SMG 266 / 2430).